The primary structure comprises 220 residues: Pyridoxine/pyridoxamine 5'-phosphate oxidase (220 aa).

Residues 8 to 11 (RKSY) and lysine 66 contribute to the substrate site. FMN-binding positions include 61–66 (RVVLIK), 76–77 (FT), arginine 82, and lysine 83. Tyrosine 123, arginine 127, and serine 131 together coordinate substrate. Residues 140-141 (QS) and tryptophan 184 contribute to the FMN site. 190-192 (RLH) serves as a coordination point for substrate. Arginine 194 is a binding site for FMN.

This sequence belongs to the pyridoxamine 5'-phosphate oxidase family. In terms of assembly, homodimer. It depends on FMN as a cofactor.

It carries out the reaction pyridoxamine 5'-phosphate + O2 + H2O = pyridoxal 5'-phosphate + H2O2 + NH4(+). The catalysed reaction is pyridoxine 5'-phosphate + O2 = pyridoxal 5'-phosphate + H2O2. It participates in cofactor metabolism; pyridoxal 5'-phosphate salvage; pyridoxal 5'-phosphate from pyridoxamine 5'-phosphate: step 1/1. Its pathway is cofactor metabolism; pyridoxal 5'-phosphate salvage; pyridoxal 5'-phosphate from pyridoxine 5'-phosphate: step 1/1. Functionally, catalyzes the oxidation of either pyridoxine 5'-phosphate (PNP) or pyridoxamine 5'-phosphate (PMP) into pyridoxal 5'-phosphate (PLP). The protein is Pyridoxine/pyridoxamine 5'-phosphate oxidase of Albidiferax ferrireducens (strain ATCC BAA-621 / DSM 15236 / T118) (Rhodoferax ferrireducens).